The primary structure comprises 504 residues: Glucose-6-phosphate isomerase (504 aa).

Glu-333 serves as the catalytic Proton donor. Residues His-364 and Lys-473 contribute to the active site.

The protein belongs to the GPI family.

It localises to the cytoplasm. The enzyme catalyses alpha-D-glucose 6-phosphate = beta-D-fructose 6-phosphate. It functions in the pathway carbohydrate biosynthesis; gluconeogenesis. Its pathway is carbohydrate degradation; glycolysis; D-glyceraldehyde 3-phosphate and glycerone phosphate from D-glucose: step 2/4. Functionally, catalyzes the reversible isomerization of glucose-6-phosphate to fructose-6-phosphate. The chain is Glucose-6-phosphate isomerase from Xanthomonas axonopodis pv. citri (strain 306).